A 1416-amino-acid chain; its full sequence is Isonitrile lipopeptide synthase (1416 aa).

Residues 188 to 215 (LRETAKVAEALRRQADAVQRELTAEAGQ) are a coiled coil. A Carrier domain is found at 965–1028 (RVWSRHLGRP…NLVCDLGSNP (64 aa)). At serine 988 the chain carries O-(pantetheine 4'-phosphoryl)serine.

The protein belongs to the ATP-dependent AMP-binding enzyme family. Pantetheine 4'-phosphate is required as a cofactor.

It carries out the reaction 2 a (3R)-3-isocyanyl-fatty acyl-[ACP] + L-lysine + ATP + 2 NADPH = an isonitrile lipopeptide + 2 holo-[ACP] + AMP + diphosphate + 2 NADP(+). In terms of biological role, nonribosomal peptide synthetase (NRPS) involved in the biosynthesis of a unique class of isonitrile lipopeptides (INLPs) that seem to play a role in metal acquisition in M.marinum. Catalyzes the final step in the pathway, i.e. the condensation of a (3R)-3-isocyanyl-fatty acyl-[ACP] to both amino groups of a lysine, producing isonitrile lipopeptides. The sequence is that of Isonitrile lipopeptide synthase from Mycobacterium marinum (strain ATCC BAA-535 / M).